Here is a 327-residue protein sequence, read N- to C-terminus: Phenylalanine--tRNA ligase alpha subunit (327 aa).

Glu-252 is a Mg(2+) binding site.

The protein belongs to the class-II aminoacyl-tRNA synthetase family. Phe-tRNA synthetase alpha subunit type 1 subfamily. As to quaternary structure, tetramer of two alpha and two beta subunits. Mg(2+) serves as cofactor.

It localises to the cytoplasm. The enzyme catalyses tRNA(Phe) + L-phenylalanine + ATP = L-phenylalanyl-tRNA(Phe) + AMP + diphosphate + H(+). The polypeptide is Phenylalanine--tRNA ligase alpha subunit (Photorhabdus laumondii subsp. laumondii (strain DSM 15139 / CIP 105565 / TT01) (Photorhabdus luminescens subsp. laumondii)).